A 161-amino-acid polypeptide reads, in one-letter code: uncharacterized protein (161 aa).

Positions 1-10 (MSKQQEQDTP) are enriched in polar residues. 3 disordered regions span residues 1–20 (MSKQ…QRLQ), 55–84 (KKTR…MSDE), and 118–161 (LLQQ…ANNS). The stretch at 82–107 (SDEEYARQLQEEMDRLDASIQMDKEA) forms a coiled coil. A compositionally biased stretch (low complexity) spans 144 to 161 (QQSSNTTTSSSCQSANNS).

This is an uncharacterized protein from Caenorhabditis elegans.